We begin with the raw amino-acid sequence, 550 residues long: MAGALFEPSFAAAHPAGLLRRPVTRTVVLSVAATSIAHMFEISLPDPTELCRSDDGALVAAIEDCARVEAAASARRLSAIAELTGRRTGADQRADWACDFWDCAAAEVAAALTISHGKASGQMHLSLALNRLPQVAALFLAGHLGARLFSIIAWRTYLVRDPHALSLLDAALAEHAGAWGPLSAPKLEKAIDSWIDRYDPGALRRSRISARTRDLCIGDPDEDAGTAALWGRLYATDAAMLDRRLTEMAHGVCEDDPRTLAQRRADALGALAAGADHLACGCGKPDCPSGAGNDERAAGVVIHVVADASALDAQPDPHLSGDEPPSRPLTPETTLFEALTPDPEPDPPATHAPAELITTGGGVVPAPLLAELIRGGATISQVRHPGDLAAEPHYRPSAKLAEFVRMRDLTCRFPGCDVPAEFCDIDHSAPWPLGPTHPSNLKCACRKHHLLKTFWTGWRDVQLPDGTVIWTAPNGHTYTTHPGSRIFFPTWHTTTAELPQTSTAAVNVDARGLMMPRRRRTRAAELAHRINAERALNDAYMAERNKPPSF.

Positions 1-13 (MAGALFEPSFAAA) are cleaved as a signal peptide. Residues 312–358 (DAQPDPHLSGDEPPSRPLTPETTLFEALTPDPEPDPPATHAPAELIT) form a disordered region.

This sequence to M.tuberculosis Rv3776.

This is an uncharacterized protein from Mycobacterium tuberculosis (strain CDC 1551 / Oshkosh).